A 165-amino-acid chain; its full sequence is Large ribosomal subunit protein uL10 (165 aa).

The protein belongs to the universal ribosomal protein uL10 family. In terms of assembly, part of the ribosomal stalk of the 50S ribosomal subunit. The N-terminus interacts with L11 and the large rRNA to form the base of the stalk. The C-terminus forms an elongated spine to which L12 dimers bind in a sequential fashion forming a multimeric L10(L12)X complex.

Its function is as follows. Forms part of the ribosomal stalk, playing a central role in the interaction of the ribosome with GTP-bound translation factors. In Burkholderia ambifaria (strain MC40-6), this protein is Large ribosomal subunit protein uL10.